Reading from the N-terminus, the 546-residue chain is Probable Xaa-Pro aminopeptidase pepP (546 aa).

Mn(2+) is bound by residues aspartate 341, aspartate 352, glutamate 475, and glutamate 515.

This sequence belongs to the peptidase M24B family. Requires Mn(2+) as cofactor.

It carries out the reaction Release of any N-terminal amino acid, including proline, that is linked to proline, even from a dipeptide or tripeptide.. Functionally, catalyzes the removal of a penultimate prolyl residue from the N-termini of peptides. This Sclerotinia sclerotiorum (strain ATCC 18683 / 1980 / Ss-1) (White mold) protein is Probable Xaa-Pro aminopeptidase pepP (pepP).